A 269-amino-acid chain; its full sequence is Hydroxyethylthiazole kinase (269 aa).

A substrate-binding site is contributed by methionine 42. ATP-binding residues include arginine 118 and serine 164. Glycine 191 provides a ligand contact to substrate.

It belongs to the Thz kinase family. Mg(2+) is required as a cofactor.

The catalysed reaction is 5-(2-hydroxyethyl)-4-methylthiazole + ATP = 4-methyl-5-(2-phosphooxyethyl)-thiazole + ADP + H(+). Its pathway is cofactor biosynthesis; thiamine diphosphate biosynthesis; 4-methyl-5-(2-phosphoethyl)-thiazole from 5-(2-hydroxyethyl)-4-methylthiazole: step 1/1. Catalyzes the phosphorylation of the hydroxyl group of 4-methyl-5-beta-hydroxyethylthiazole (THZ). The chain is Hydroxyethylthiazole kinase from Listeria welshimeri serovar 6b (strain ATCC 35897 / DSM 20650 / CCUG 15529 / CIP 8149 / NCTC 11857 / SLCC 5334 / V8).